Reading from the N-terminus, the 374-residue chain is Anhydro-N-acetylmuramic acid kinase (374 aa).

Residue Gly9–Asp16 participates in ATP binding.

Belongs to the anhydro-N-acetylmuramic acid kinase family.

The catalysed reaction is 1,6-anhydro-N-acetyl-beta-muramate + ATP + H2O = N-acetyl-D-muramate 6-phosphate + ADP + H(+). The protein operates within amino-sugar metabolism; 1,6-anhydro-N-acetylmuramate degradation. It participates in cell wall biogenesis; peptidoglycan recycling. In terms of biological role, catalyzes the specific phosphorylation of 1,6-anhydro-N-acetylmuramic acid (anhMurNAc) with the simultaneous cleavage of the 1,6-anhydro ring, generating MurNAc-6-P. Is required for the utilization of anhMurNAc either imported from the medium or derived from its own cell wall murein, and thus plays a role in cell wall recycling. This chain is Anhydro-N-acetylmuramic acid kinase, found in Methylobacterium nodulans (strain LMG 21967 / CNCM I-2342 / ORS 2060).